Reading from the N-terminus, the 567-residue chain is Protein NRT1/ PTR FAMILY 4.5 (567 aa).

12 helical membrane-spanning segments follow: residues 30-50 (GMLAASFVLAVEILENLAFLA), 70-92 (SSSEVTTFMATAFLLALLGGFLA), 99-118 (FVIFLISASIEFLGLILLTI), 147-167 (AFLFVGLYLVSLGIGGIKGSL), 189-209 (FFNYYVFCLSCGALVAVTFVV), 219-239 (WGFGVSTISIFLSILVFLLGS), 326-346 (IVLKMLPIFGCTIMLNCCLAQ), 374-394 (VFPVVFMLILAPTYDHLIIPF), 411-431 (IGVGLVLSIVAMAVAALVELK), 448-468 (LPITFLWIALQYLFLGSADLF), 491-511 (SLSWASLALGYYLSSVMVPIV), and 535-555 (LFYWLMCVLSVVNFLHYLFWA).

This sequence belongs to the major facilitator superfamily. Proton-dependent oligopeptide transporter (POT/PTR) (TC 2.A.17) family. In terms of tissue distribution, expressed in flowers and siliques.

It is found in the membrane. Its function is as follows. Involved in abscisic acid transport. In Arabidopsis thaliana (Mouse-ear cress), this protein is Protein NRT1/ PTR FAMILY 4.5 (NPF4.5).